A 110-amino-acid polypeptide reads, in one-letter code: MKNKKIIKKNFEFQEIISKQEFHRNSAFVIYYSKNDKGYFRYGISVGKKLGNAVTRNKIKRQIRMMIQDQIKILPEFSYDIVIIARNRMMQNSFDQNQKELNKLVVRFLK.

It belongs to the RnpA family. Consists of a catalytic RNA component (M1 or rnpB) and a protein subunit.

It catalyses the reaction Endonucleolytic cleavage of RNA, removing 5'-extranucleotides from tRNA precursor.. In terms of biological role, RNaseP catalyzes the removal of the 5'-leader sequence from pre-tRNA to produce the mature 5'-terminus. It can also cleave other RNA substrates such as 4.5S RNA. The protein component plays an auxiliary but essential role in vivo by binding to the 5'-leader sequence and broadening the substrate specificity of the ribozyme. This is Ribonuclease P protein component from Mesoplasma florum (strain ATCC 33453 / NBRC 100688 / NCTC 11704 / L1) (Acholeplasma florum).